The following is a 703-amino-acid chain: Polyribonucleotide nucleotidyltransferase (703 aa).

Mg(2+) is bound by residues Asp489 and Asp495. One can recognise a KH domain in the interval 556 to 615 (PTMIAMKIDTDKIRDVIGKGGATIRAICEETKASIDIEDDGSIKIFGETKEAAEAARQRV). The S1 motif domain maps to 625-693 (GKIYVGKVER…NRGRIKLSIK (69 aa)).

This sequence belongs to the polyribonucleotide nucleotidyltransferase family. Component of the RNA degradosome, which is a multiprotein complex involved in RNA processing and mRNA degradation. Mg(2+) is required as a cofactor.

It is found in the cytoplasm. The catalysed reaction is RNA(n+1) + phosphate = RNA(n) + a ribonucleoside 5'-diphosphate. Functionally, involved in mRNA degradation. Catalyzes the phosphorolysis of single-stranded polyribonucleotides processively in the 3'- to 5'-direction. This is Polyribonucleotide nucleotidyltransferase from Pseudomonas fluorescens (strain ATCC BAA-477 / NRRL B-23932 / Pf-5).